Consider the following 392-residue polypeptide: Sex-determining region Y protein (392 aa).

Residues 4-81 (HVKRPMNAFM…YKYQPHRRAK (78 aa)) form a sufficient for interaction with KPNB1 region. A DNA-binding region (HMG box) is located at residues 5–73 (VKRPMNAFMV…LHREKYPNYK (69 aa)). 2 required for nuclear localization regions span residues 6-22 (KRPM…ERHK) and 75-81 (QPHRRAK). Residues 52–84 (RPFFQEAQRLKILHREKYPNYKYQPHRRAKVSQ) form a sufficient for interaction with EP300 region. The residue at position 81 (lysine 81) is an N6-acetyllysine. The tract at residues 92–144 (AVASTKLYNLLQWDRNPHAITYRQDWSRAAHLYSKNQQSFYWQPVDIPTGHLQ) is necessary for interaction with ZNF208 isoform KRAB-O. Residues 94–138 (ASTKLYNLLQWDRNPHAITYRQDWSRAAHLYSKNQQSFYWQPVDI) are necessary for interaction with SLC9A3R2 and nuclear accumulation of SLC9A3R2. The segment at 142–361 (HLQQQQQQQQ…QQQQQQQQQQ (220 aa)) is disordered. A compositionally biased stretch (low complexity) spans 144–181 (QQQQQQQQQQQFHNHHQQQQQFYDHHQQQQQQQQQQQQ). Composition is skewed to basic and acidic residues over residues 182-197 (FHDH…DHHQ) and 210-228 (QEQQ…HDHQ). A compositionally biased stretch (low complexity) spans 229-238 (QQQQQQQQQQ). 3 stretches are compositionally biased toward basic and acidic residues: residues 239-250 (FHDHHQQKQQFH), 261-295 (FHDH…HDHP), and 313-349 (QFHD…DHHQ). Low complexity predominate over residues 350–361 (QQQQQQQQQQQQ).

This sequence belongs to the SRY family. Interacts with KPNB1, ZNF208 isoform KRAB-O, PARP1 and SLC9A3R2. The interaction with KPNB1 is sensitive to dissociation by Ran in the GTP-bound form. Interaction with PARP1 impaired its DNA-binding activity. Interacts with CALM, EP300, HDAC3 and WT1. The interaction with EP300 modulates its DNA-binding activity. In terms of processing, degraded due to the presence of a degron at the C-terminus that promotes its degradation. Phosphorylated on serine residues by PKA. Phosphorylation by PKA enhances its DNA-binding activity and stimulates transcription repression. Post-translationally, acetylation of Lys-81 contributes to its nuclear localization and enhances its interaction with KPNB1. In terms of processing, poly-ADP-ribosylated by PARP1. ADP-ribosylation reduces its DNA-binding activity. In terms of tissue distribution, expressed in gonadal somatic pre-Sertoli cells. Expressed in the substantia nigra of the brain (at protein level). Expressed in diencephalon, cortex, the substantia nigra of the midbrain and the medial mammillary bodies of the hypothalamus of male, but not female. Expressed in gonadal somatic pre-Sertoli cells. While it is expressed at lower level compared to isoform Sry-S, this form is more stable and constitutes the predominant protein product of the Sry locus in XY gonads (at protein level).

The protein resides in the nucleus speckle. Its subcellular location is the cytoplasm. The protein localises to the nucleus. Transcriptional regulator that controls a genetic switch in male development. It is necessary and sufficient for initiating male sex determination by directing the development of supporting cell precursors (pre-Sertoli cells) as Sertoli rather than granulosa cells. Involved in different aspects of gene regulation including promoter activation or repression. Binds to the DNA consensus sequence 5'-[AT]AACAA[AT]-3'. SRY HMG box recognizes DNA by partial intercalation in the minor groove and promotes DNA bending. Also involved in pre-mRNA splicing. In male adult brain involved in the maintenance of motor functions of dopaminergic neurons. Functionally, constitutes the major isoform, which is necessary and sufficient for initiating male sex determination. In terms of biological role, constitutes a minor isoform, which is unstable due to the presence of a degron at the C-terminus that promotes its degradation. Not necessary and sufficient for initiating male sex determination. This is Sex-determining region Y protein from Mus musculus (Mouse).